Consider the following 286-residue polypeptide: Shikimate dehydrogenase (NADP(+)) (286 aa).

Shikimate is bound by residues 20-22 and Ser67; that span reads SLS. Lys71 (proton acceptor) is an active-site residue. Shikimate-binding residues include Asn92 and Asp107. Residues 131–135 and Ala230 contribute to the NADP(+) site; that span reads GGGGA. Tyr232 serves as a coordination point for shikimate. Gly253 contacts NADP(+).

The protein belongs to the shikimate dehydrogenase family. In terms of assembly, homodimer.

The catalysed reaction is shikimate + NADP(+) = 3-dehydroshikimate + NADPH + H(+). It functions in the pathway metabolic intermediate biosynthesis; chorismate biosynthesis; chorismate from D-erythrose 4-phosphate and phosphoenolpyruvate: step 4/7. Its function is as follows. Involved in the biosynthesis of the chorismate, which leads to the biosynthesis of aromatic amino acids. Catalyzes the reversible NADPH linked reduction of 3-dehydroshikimate (DHSA) to yield shikimate (SA). The sequence is that of Shikimate dehydrogenase (NADP(+)) from Lactococcus lactis subsp. cremoris (strain MG1363).